Reading from the N-terminus, the 431-residue chain is Probable glucarate dehydratase (431 aa).

Substrate contacts are provided by H29, T108, Y153, and K198. The Proton acceptor role is filled by K200. Positions 228 and 276 each coordinate Mg(2+). Substrate-binding positions include 228 to 230, N276, 327 to 329, H356, and R410; these read DPN and HSN. H327 (proton acceptor) is an active-site residue.

Belongs to the mandelate racemase/muconate lactonizing enzyme family. GlucD subfamily. Mg(2+) is required as a cofactor.

It carries out the reaction D-glucarate = 5-dehydro-4-deoxy-D-glucarate + H2O. It participates in carbohydrate acid metabolism; D-glucarate degradation; 2,5-dioxopentanoate from D-glucarate: step 1/2. Catalyzes the dehydration of glucarate to 5-keto-4-deoxy-D-glucarate (5-kdGluc). The polypeptide is Probable glucarate dehydratase (gudD) (Streptomyces coelicolor (strain ATCC BAA-471 / A3(2) / M145)).